We begin with the raw amino-acid sequence, 532 residues long: MGWFNKIFKGSNQRLRVGNNKHNHNVYYDNYPTASHDDEPSAADTDADNDEPHHTQEPSTSEDNTSNDQENEDIDRAIALSLLEENQEQTSISGKYSMPVDEDEQLARALQESMVVGNSPRHKSGSTYDNGNAYGAGDLYGNGHMYGGGNVYANGDIYYPRPITFQMDFRICAGCNMEIGHGRFLNCLNSLWHPECFRCYGCSQPISEYEFSTSGNYPFHKACYRERYHPKCDVCSHFIPTNHAGLIEYRAHPFWVQKYCPSHEHDATPRCCSCERMEPRNTRYVELNDGRKLCLECLDSAVMDTMQCQPLYLQIQNFYEGLNMKVEQEVPLLLVERQALNEAREGEKNGHYHMPETRGLCLSEEQTVSTVRKRSKHGTGKWAGNITEPYKLTRQCEVTAILILFGLPRLLTGSILAHEMMHAWMRLKGFRTLSQDVEEGICQVMAHKWLDAELAAGSTNSNAASSSSSSQGLKKGPRSQYERKLGEFFKHQIESDASPVYGDGFRAGRLAVHKYGLRKTLEHIQMTGRFPV.

The tract at residues 26–71 (VYYDNYPTASHDDEPSAADTDADNDEPHHTQEPSTSEDNTSNDQEN) is disordered. Polar residues predominate over residues 57–68 (EPSTSEDNTSND). Residues 69–88 (QENEDIDRAIALSLLEENQE) form the UIM 1 domain. Lys-95 is covalently cross-linked (Glycyl lysine isopeptide (Lys-Gly) (interchain with G-Cter in ubiquitin)). The UIM 2 domain occupies 101 to 120 (DEDEQLARALQESMVVGNSP). One can recognise an LIM zinc-binding domain in the interval 170–230 (RICAGCNMEI…KACYRERYHP (61 aa)). Glycyl lysine isopeptide (Lys-Gly) (interchain with G-Cter in ubiquitin) cross-links involve residues Lys-221, Lys-348, Lys-376, Lys-381, Lys-391, Lys-474, Lys-475, and Lys-519.

As to quaternary structure, interacts with ubiquitin. Interacts (via C-terminus) with DA2. Interacts with BB. Interacts with UBP15. Interacts with TCP14 and TCP15. Post-translationally, ubiquitinated at Lys-95, Lys-221, Lys-348, Lys-376, Lys-381, Lys-391, Lys-474, Lys-475 and Lys-519 by the E3 ubiquitin-protein ligases BB and DA2.

Functionally, ubiquitin receptor that limits final seed and organ size by restricting the period of cell proliferation. May act maternally to control seed mass. Acts synergistically with DA2 to regulate seed size. Functions synergistically with DA2 to restrict cell proliferation in the maternal integuments of ovules and developing seeds. Functions antagonistically in a common pathway with UBP15 to regulate seed size. Associates physically with UBP15 and modulates the stability of UBP15, which promote cell proliferation in the integuments of ovules and developing seeds. Functions as a peptidase and cleaves the N-terminal sequence of E3 ubiquitin-protein ligases BB and DA2 in a ubiquitin-dependent manner. Cleaves the deubiquitinating enzyme UBP15, which promotes cell proliferation, and the transcription factors TCP15 and TCP22, which promote cell proliferation and repress endoreduplication. Involved in the promotion of leaf senescence, in addition to its function in restricting plant growth. Acts redundantly with DAR1 and DAR2 to regulate endoreduplication during leaf development. Together with DAR1 and DAR2, modulates the protein stability of the transcription factors TCP14 and TCP15, which repress endoreduplication by directly regulating the expression of cell-cycle genes. In Arabidopsis thaliana (Mouse-ear cress), this protein is Protein DA1 (DA1).